Here is a 491-residue protein sequence, read N- to C-terminus: Ketol-acid reductoisomerase (NADP(+)) (491 aa).

The KARI N-terminal Rossmann domain occupies 15 to 208; sequence AQLGKCRFMG…GGHRAGVLES (194 aa). Residues 45–48, R68, R76, S78, and 108–110 contribute to the NADP(+) site; these read CGAQ and DKQ. H132 is an active-site residue. Residue G158 coordinates NADP(+). KARI C-terminal knotted domains follow at residues 209 to 344 and 345 to 484; these read SFVA…TAPQ and YEGK…MTDM. Positions 217, 221, 389, and 393 each coordinate Mg(2+). S414 is a binding site for substrate.

The protein belongs to the ketol-acid reductoisomerase family. Requires Mg(2+) as cofactor.

The catalysed reaction is (2R)-2,3-dihydroxy-3-methylbutanoate + NADP(+) = (2S)-2-acetolactate + NADPH + H(+). It carries out the reaction (2R,3R)-2,3-dihydroxy-3-methylpentanoate + NADP(+) = (S)-2-ethyl-2-hydroxy-3-oxobutanoate + NADPH + H(+). It functions in the pathway amino-acid biosynthesis; L-isoleucine biosynthesis; L-isoleucine from 2-oxobutanoate: step 2/4. The protein operates within amino-acid biosynthesis; L-valine biosynthesis; L-valine from pyruvate: step 2/4. Involved in the biosynthesis of branched-chain amino acids (BCAA). Catalyzes an alkyl-migration followed by a ketol-acid reduction of (S)-2-acetolactate (S2AL) to yield (R)-2,3-dihydroxy-isovalerate. In the isomerase reaction, S2AL is rearranged via a Mg-dependent methyl migration to produce 3-hydroxy-3-methyl-2-ketobutyrate (HMKB). In the reductase reaction, this 2-ketoacid undergoes a metal-dependent reduction by NADPH to yield (R)-2,3-dihydroxy-isovalerate. This chain is Ketol-acid reductoisomerase (NADP(+)), found in Klebsiella pneumoniae (strain 342).